The sequence spans 1103 residues: A disintegrin and metalloproteinase with thrombospondin motifs 10 (1103 aa).

An N-terminal signal peptide occupies residues 1 to 25; sequence MAPACQILRWALALGLGLMFEVTHA. A propeptide spanning residues 26–233 is cleaved from the precursor; that stretch reads FRSQDEFLSS…TERGQPGLKR (208 aa). N-linked (GlcNAc...) asparagine glycans are attached at residues N90, N222, and N323. The tract at residues 213–233 is disordered; the sequence is KPPPARPLGNETERGQPGLKR. Residues 239–457 form the Peptidase M12B domain; the sequence is RYVETLVVAD…GLGLCLNNRP (219 aa). 11 disulfide bridges follow: C315–C376, C351–C358, C370–C452, C409–C436, C479–C501, C490–C508, C496–C531, C521–C536, C559–C596, C563–C601, and C574–C586. H392 serves as a coordination point for Zn(2+). The active site involves E393. Zn(2+) contacts are provided by H396 and H402. In terms of domain architecture, Disintegrin spans 460–546; sequence QDFVYPTVAP…VPFGSRPEGV (87 aa). Positions 547–602 constitute a TSP type-1 1 domain; sequence DGAWGPWTPWGDCSRTCGGGVSSSSRHCDSPRPTIGGKYCLGERRRHRSCNTDDCP. The segment at 706 to 828 is spacer; the sequence is ETIEGVFSPA…IARDSLPPYS (123 aa). N-linked (GlcNAc...) asparagine glycosylation is found at N740 and N795. 4 TSP type-1 domains span residues 825-883, 884-945, 947-1001, and 1003-1058; these read PPYS…NTEP, CPPD…PTCP, EWAA…NLRR, and PPAR…AKCD. The N-linked (GlcNAc...) asparagine glycan is linked to N892. The 39-residue stretch at 1065–1103 folds into the PLAC domain; that stretch reads GPEECKDVNKVAYCPLVLKFQFCSRAYFRQMCCKTCHGH.

As to quaternary structure, interacts with FBN1; this interaction promotes microfibrils assembly. It depends on Zn(2+) as a cofactor. Glycosylated. Can be O-fucosylated by POFUT2 on a serine or a threonine residue found within the consensus sequence C1-X(2)-(S/T)-C2-G of the TSP type-1 repeat domains where C1 and C2 are the first and second cysteine residue of the repeat, respectively. Fucosylated repeats can then be further glycosylated by the addition of a beta-1,3-glucose residue by the glucosyltransferase, B3GALTL. Fucosylation mediates the efficient secretion of ADAMTS family members. Can also be C-glycosylated with one or two mannose molecules on tryptophan residues within the consensus sequence W-X-X-W of the TPRs, and N-glycosylated. These other glycosylations can also facilitate secretion. Widely expressed in adult tissues.

The protein localises to the secreted. The protein resides in the extracellular space. It is found in the extracellular matrix. Its function is as follows. Metalloprotease that participate in microfibrils assembly. Microfibrils are extracellular matrix components occurring independently or along with elastin in the formation of elastic tissues. In Homo sapiens (Human), this protein is A disintegrin and metalloproteinase with thrombospondin motifs 10 (ADAMTS10).